The following is a 110-amino-acid chain: Flowering-promoting factor 1 (110 aa).

The protein belongs to the FPF1 family.

Its function is as follows. Modulates the competence to flowering of apical meristems. Involved in a GA-dependent response in apical meristems during the transition to flowering. This is Flowering-promoting factor 1 (FPF1) from Arabidopsis thaliana (Mouse-ear cress).